Consider the following 935-residue polypeptide: DNA repair protein rev1 (935 aa).

In terms of domain architecture, BRCT spans 59–147 (SKSDLFHGLA…KILPWINYRT (89 aa)). Positions 162–178 (SKPSQPEGNLEDIQTSS) are enriched in polar residues. The disordered stretch occupies residues 162–193 (SKPSQPEGNLEDIQTSSQEEEHDNEKDKTKES). Over residues 184–193 (DNEKDKTKES) the composition is skewed to basic and acidic residues. An interaction with target DNA region spans residues 235–245 (FFSSSRLHHLS). DCTP-binding positions include Arg-240 and 283-287 (DFDCF). The region spanning 279–460 (LLHVDFDCFF…LSVQDLPGVG (182 aa)) is the UmuC domain. Positions 283 and 284 each coordinate Mg(2+). An interaction with target DNA region spans residues 310–312 (IKN). Residues 317-323 (SCNYEAR), Asn-329, and Asp-378 contribute to the dCTP site. The Mg(2+) site is built by Asp-378 and Glu-379. 2 interaction with target DNA regions span residues 460–463 (GSSQ) and 517–525 (RRSISVDVN).

This sequence belongs to the DNA polymerase type-Y family. Mg(2+) is required as a cofactor.

The protein localises to the nucleus. It localises to the nucleolus. The protein resides in the mitochondrion. Its subcellular location is the cytoplasm. It is found in the cytoskeleton. The protein localises to the spindle. Functionally, deoxycytidyl transferase involved in DNA repair. Transfers a dCMP residue from dCTP to the 3'-end of a DNA primer in a template-dependent reaction. May assist in the first step in the bypass of abasic lesions by the insertion of a nucleotide opposite the lesion. Required for normal induction of mutations by physical and chemical agents. Involved in mitochondrial DNA mutagenesis. This Schizosaccharomyces pombe (strain 972 / ATCC 24843) (Fission yeast) protein is DNA repair protein rev1.